We begin with the raw amino-acid sequence, 406 residues long: (R)-benzylsuccinyl-CoA dehydrogenase (406 aa).

The protein belongs to the acyl-CoA dehydrogenase family. As to quaternary structure, homotetramer. It depends on FAD as a cofactor.

The enzyme catalyses (R)-2-benzylsuccinyl-CoA + oxidized [electron-transfer flavoprotein] + H(+) = (E)-2-benzylidenesuccinyl-CoA + reduced [electron-transfer flavoprotein]. It functions in the pathway xenobiotic degradation; toluene degradation. With respect to regulation, inhibited by (S)-benzylsuccinyl-CoA. Its function is as follows. Catalyzes the oxidation of benzylsuccinyl-CoA to benzylidenesuccinyl-CoA. This Thauera aromatica protein is (R)-benzylsuccinyl-CoA dehydrogenase (bbsG).